A 355-amino-acid polypeptide reads, in one-letter code: BAG family molecular chaperone regulator 1 (355 aa).

The disordered stretch occupies residues 1 to 112; it reads MAGRSAARRP…KNVTGTQVEE (112 aa). Basic and acidic residues predominate over residues 26–39; that stretch reads PAREPRQSESRAER. 2 stretches are compositionally biased toward polar residues: residues 80 to 91 and 102 to 111; these read SSQSEKVGSSSR and SKNVTGTQVE. 7 tandem repeats follow at residues 103–108, 111–116, 117–122, 123–128, 129–134, 141–146, and 147–152. The interval 111–209 is 7 X 6 AA tandem repeat of E-E-X(4); sequence EEVTKIEEAT…LIFKGKSLKE (99 aa). Positions 132–151 are disordered; it reads TQTDNMAKTEEMVQTEEMET. Residues 154–234 enclose the Ubiquitin-like domain; sequence LSVIVTHSNE…VMLIGEKSNP (81 aa). Residues 182–229 are interaction with HSPA8; sequence DLAQLVEEATGVPLPFQKLIFKGKSLKEMETPLSALGMQNGCRVMLIG. Residues 226-355 are interaction with PPP1R15A; that stretch reads MLIGEKSNPE…LQSTNLALAE (130 aa). The BAG domain occupies 256 to 336; the sequence is HLQELNKELS…VFLAECDTVE (81 aa).

Homodimer. Forms a heteromeric complex with HSP70/HSC70. Binds to the ATPase domain of HSP/HSC70 chaperones. Interacts with NR3C1. Interacts with the N-terminal region of MAPRE2. Interacts with PPP1R15A. Interacts with BCL2 in an ATP-dependent manner. Interacts with SIAH1, HSPA8 (via NBD), HSPA1A (via NBD) and HSPA1B (via NBD). Interacts with SIAH2. Interacts with ESR1; the interaction is promoted in the absence of estradiol (17-beta-estradiol/E2). Post-translationally, ubiquitinated; mediated by SIAH1 or SIAH2 and leading to its subsequent proteasomal degradation. In terms of tissue distribution, isoform 2 is expressed in the heart, lung, kidney and spinal cord. Isoform 1 and isoform 2 are expressed in hematopoietic cell lines. The levels of isoform 2 are relatively constant in all the cell lines examined while the levels of isoform 1 are more variable (at protein level). Isoform 1 is expressed in the lung and kidney. Isoform 2 is expressed in various tissues, with highest levels in testis and stomach.

Its subcellular location is the nucleus. The protein localises to the cytoplasm. Its function is as follows. Co-chaperone for HSP70 and HSC70 chaperone proteins. Acts as a nucleotide-exchange factor (NEF) promoting the release of ADP from the HSP70 and HSC70 proteins thereby triggering client/substrate protein release. Nucleotide release is mediated via its binding to the nucleotide-binding domain (NBD) of HSPA8/HSC70 where as the substrate release is mediated via its binding to the substrate-binding domain (SBD) of HSPA8/HSC70. Inhibits the pro-apoptotic function of PPP1R15A, and has anti-apoptotic activity. Markedly increases the anti-cell death function of BCL2 induced by various stimuli. Involved in the STUB1-mediated proteasomal degradation of ESR1 in response to age-related circulating estradiol (17-beta-estradiol/E2) decline, thereby promotes neuronal apoptosis in response to ischemic reperfusion injury. This Mus musculus (Mouse) protein is BAG family molecular chaperone regulator 1 (Bag1).